The following is a 100-amino-acid chain: Aspartyl/glutamyl-tRNA(Asn/Gln) amidotransferase subunit C (100 aa).

The protein belongs to the GatC family. Heterotrimer of A, B and C subunits.

It carries out the reaction L-glutamyl-tRNA(Gln) + L-glutamine + ATP + H2O = L-glutaminyl-tRNA(Gln) + L-glutamate + ADP + phosphate + H(+). The catalysed reaction is L-aspartyl-tRNA(Asn) + L-glutamine + ATP + H2O = L-asparaginyl-tRNA(Asn) + L-glutamate + ADP + phosphate + 2 H(+). Its function is as follows. Allows the formation of correctly charged Asn-tRNA(Asn) or Gln-tRNA(Gln) through the transamidation of misacylated Asp-tRNA(Asn) or Glu-tRNA(Gln) in organisms which lack either or both of asparaginyl-tRNA or glutaminyl-tRNA synthetases. The reaction takes place in the presence of glutamine and ATP through an activated phospho-Asp-tRNA(Asn) or phospho-Glu-tRNA(Gln). This chain is Aspartyl/glutamyl-tRNA(Asn/Gln) amidotransferase subunit C, found in Rickettsia rickettsii (strain Sheila Smith).